Here is a 477-residue protein sequence, read N- to C-terminus: Calcium uptake protein 1, mitochondrial (477 aa).

The transit peptide at 1-33 (MFRLNTLSALAELAVGSRWYHGASQPTQTKRRL) directs the protein to the mitochondrion. Positions 57 to 107 (AESPPCVNSKKPDTEDKERNKDSGEVSSREGRAADAAAEPYPEDKKKKRSG) are disordered. Residues 66–89 (KKPDTEDKERNKDSGEVSSREGRA) are compositionally biased toward basic and acidic residues. Residues 101–112 (KKKKRSGFRDRK) form a polybasic region region. S124 carries the post-translational modification Phosphoserine; by PKB. The segment at 128–131 (KIFR) is k/R-ring. One can recognise an EF-hand 1 domain in the interval 220-255 (TPQRNFEIAFKMFDLNGDGEVDMEEFEQVQSIIRSQ). Ca(2+) is bound by residues D233, N235, D237, E239, and E244. Residues 261–265 (RHRDR) form a k/R-ring region. One can recognise an EF-hand 2; degenerate domain in the interval 356–376 (KDGKGLTFQEVENFFTFLKNI). The EF-hand 3 domain occupies 410–445 (LSDHVCDVVFALFDCDGNGELSNKEFVSIMKQRLMR). 5 residues coordinate Ca(2+): D423, D425, N427, E429, and E434. R457 carries the post-translational modification Asymmetric dimethylarginine. A C-helix region region spans residues 457-467 (RLMQAMWKCAQ).

It belongs to the MICU1 family. MICU1 subfamily. As to quaternary structure, heterodimer; disulfide-linked; heterodimerizes with MICU2 or MICU3. Homodimer; disulfide-linked. Component of the uniplex complex, composed of MCU, EMRE/SMDT1, MICU1 and MICU2 (or MICU3) in a 4:4:1:1 stoichiometry. The composition of calcium sensors within the uniplex complex can differ depending on tissues: a MICU1 homodimer can be present instead of the MICU1-MICU2 heterodimer in skeletal-muscle and kidney. MICU1 is recruited to the uniplex complex by EMRE/SMDT1, and it associates with MCU at low calcium levels, occluding the pore of the MCU channel. Associates with the MICOS complex. Interacts with SLC25A23. Interacts with CHCHD4/MIA40; which introduces the interchain disulfide bond with MICU2. Interacts (when methylated) with UCP2; leading to decrease the calcium sensitivity of MICU1. Heterodimer; disulfide-linked; heterodimerizes with MICU2 or MICU3. Heterodimerizes with MICU3 in skeletal muscle. Component of the uniplex complex, composed of MCU, EMRE/SMDT1, MICU1 and MICU2 (or MICU3) in a 4:4:1:1 stoichiometry. Also localizes to mitochondrial cristae junctions. Phosphorylation at Ser-124 by AKT1 impairs its maturation and stability. In terms of processing, asymmetric dimethylation at Arg-457 by PRMT1 decreases the calcium sensitivity of MICU1 by promoting interaction with UCP2. Post-translationally, degraded by YME1L1 when not complexed as homodimer or heterodimer. Not degraded when complexed as homodimer or heterodimer; the presence of the interchain disulfide bond protecting MICU1 from degradation by YME1L1. In terms of tissue distribution, expressed in skeletal muscle, heart, kidney, liver, brain, lung, fat and spleen. As to expression, specifically expressed in the skeletal muscle.

It is found in the mitochondrion intermembrane space. The protein resides in the mitochondrion inner membrane. Its function is as follows. Calcium sensor of the mitochondrial calcium uniporter (MCU) channel, which senses calcium level via its EF-hand domains. MICU1 and MICU2 (or MICU3) form a disulfide-linked heterodimer that stimulates and inhibits MCU activity, depending on the concentration of calcium. At low calcium levels, MICU1 occludes the pore of the MCU channel, preventing mitochondrial calcium uptake. At higher calcium levels, calcium-binding to MICU1 and MICU2 (or MICU3) induces a conformational change that weakens MCU-MICU1 interactions and moves the MICU1-MICU2 heterodimer away from the pore, allowing calcium permeation through the MCU channel. Also required to protect against manganese toxicity by preventing manganese uptake by MCU: mechanistically, manganese-binding to its EF-hand domains does not induce any conformational change, maintaining MCU pore occlusion. Acts as a regulator of mitochondrial cristae structure independently of its ability to regulate the mitochondrial calcium uniporter channel. Regulates glucose-dependent insulin secretion in pancreatic beta-cells by regulating mitochondrial calcium uptake. Induces T-helper 1-mediated autoreactivity, which is accompanied by the release of IFNG. Functionally, isoform that regulates mitochondrial calcium uniporter (MCU) in the skeletal muscle. Compared to other isoforms, this isoform has higher affinity for calcium, promoting mitochondrial calcium uptake at lower calcium concentrations. This allows a rapid response of mitochondrial metabolism and ensures sustained ATP production needed for resistance and strenuous exercise. This is Calcium uptake protein 1, mitochondrial from Mus musculus (Mouse).